The primary structure comprises 338 residues: DNA-directed RNA polymerase subunit alpha (338 aa).

The tract at residues Met1 to Asp234 is alpha N-terminal domain (alpha-NTD). The segment at Phe250–Phe338 is alpha C-terminal domain (alpha-CTD).

This sequence belongs to the RNA polymerase alpha chain family. In terms of assembly, homodimer. The RNAP catalytic core consists of 2 alpha, 1 beta, 1 beta' and 1 omega subunit. When a sigma factor is associated with the core the holoenzyme is formed, which can initiate transcription.

It carries out the reaction RNA(n) + a ribonucleoside 5'-triphosphate = RNA(n+1) + diphosphate. Functionally, DNA-dependent RNA polymerase catalyzes the transcription of DNA into RNA using the four ribonucleoside triphosphates as substrates. The polypeptide is DNA-directed RNA polymerase subunit alpha (Paracoccus denitrificans (strain Pd 1222)).